We begin with the raw amino-acid sequence, 478 residues long: Sorting nexin-4 (478 aa).

Residues 1-10 show a composition bias toward basic and acidic residues; that stretch reads MAVIDQHQDD. Positions 1 to 56 are disordered; sequence MAVIDQHQDDFSNVSWNTDEHTAAESSSSVTATEFDDTERNGHNAYESDAPGSDGQ. Over residues 24 to 33 the composition is skewed to low complexity; that stretch reads AESSSSVTAT. Residues 58–180 form the PX domain; the sequence is VLDCVVSEPL…IFLESPDWNA (123 aa). A 1,2-diacyl-sn-glycero-3-phospho-(1D-myo-inositol-3-phosphate)-binding residues include Arg101, Thr103, Lys127, and Arg146. Positions 459–478 are disordered; sequence EGVSGTRSTGVEPPGRRLAD.

Belongs to the sorting nexin family. As to quaternary structure, interacts with the mitochondrial prohibitin complex subunits PHB1 and PHB2; the interaction is direct and plays a role in mitophagy.

Its subcellular location is the cytoplasm. The protein resides in the cytosol. The protein localises to the preautophagosomal structure membrane. It is found in the endosome membrane. It localises to the mitochondrion membrane. Its subcellular location is the lipid droplet. Its function is as follows. Sorting nexin, involved in the separation or division of vacuoles throughout the entire life cycle of the cells. Involved in retrieval of late-Golgi SNAREs from post-Golgi endosomes to the trans-Golgi network, for cytoplasm to vacuole transport (Cvt), and autophagy of large cargos including mitophagy, pexophagy and glycophagy. Required for the switch to necrotrophic growth. The polypeptide is Sorting nexin-4 (Colletotrichum higginsianum (strain IMI 349063) (Crucifer anthracnose fungus)).